The primary structure comprises 400 residues: Enoyl-[acyl-carrier-protein] reductase [NADH] (400 aa).

NAD(+) is bound by residues 48–53 (GSSSGY), 74–75 (FE), 111–112 (DA), and 139–140 (LA). Position 225 (tyrosine 225) interacts with substrate. Catalysis depends on tyrosine 235, which acts as the Proton donor. Residues lysine 244 and 273-275 (VVT) each bind NAD(+).

It belongs to the TER reductase family. In terms of assembly, monomer.

It carries out the reaction a 2,3-saturated acyl-[ACP] + NAD(+) = a (2E)-enoyl-[ACP] + NADH + H(+). The protein operates within lipid metabolism; fatty acid biosynthesis. Involved in the final reduction of the elongation cycle of fatty acid synthesis (FAS II). Catalyzes the reduction of a carbon-carbon double bond in an enoyl moiety that is covalently linked to an acyl carrier protein (ACP). In Aliivibrio fischeri (strain MJ11) (Vibrio fischeri), this protein is Enoyl-[acyl-carrier-protein] reductase [NADH].